A 314-amino-acid chain; its full sequence is Methionyl-tRNA formyltransferase (314 aa).

Position 112-115 (112-115) interacts with (6S)-5,6,7,8-tetrahydrofolate; that stretch reads SLLP.

This sequence belongs to the Fmt family.

The enzyme catalyses L-methionyl-tRNA(fMet) + (6R)-10-formyltetrahydrofolate = N-formyl-L-methionyl-tRNA(fMet) + (6S)-5,6,7,8-tetrahydrofolate + H(+). Its function is as follows. Attaches a formyl group to the free amino group of methionyl-tRNA(fMet). The formyl group appears to play a dual role in the initiator identity of N-formylmethionyl-tRNA by promoting its recognition by IF2 and preventing the misappropriation of this tRNA by the elongation apparatus. The chain is Methionyl-tRNA formyltransferase from Aeromonas salmonicida (strain A449).